Here is a 207-residue protein sequence, read N- to C-terminus: ATP-dependent dethiobiotin synthetase BioD (207 aa).

Position 13-18 (13-18 (EVGKTV)) interacts with ATP. Threonine 17 is a Mg(2+) binding site. Residue lysine 33 is part of the active site. Residues aspartate 44 and 100–103 (EGAG) each bind ATP. The Mg(2+) site is built by aspartate 44 and glutamate 100.

The protein belongs to the dethiobiotin synthetase family. As to quaternary structure, homodimer. The cofactor is Mg(2+).

It is found in the cytoplasm. It catalyses the reaction (7R,8S)-7,8-diammoniononanoate + CO2 + ATP = (4R,5S)-dethiobiotin + ADP + phosphate + 3 H(+). It participates in cofactor biosynthesis; biotin biosynthesis; biotin from 7,8-diaminononanoate: step 1/2. Functionally, catalyzes a mechanistically unusual reaction, the ATP-dependent insertion of CO2 between the N7 and N8 nitrogen atoms of 7,8-diaminopelargonic acid (DAPA, also called 7,8-diammoniononanoate) to form a ureido ring. In Christiangramia forsetii (strain DSM 17595 / CGMCC 1.15422 / KT0803) (Gramella forsetii), this protein is ATP-dependent dethiobiotin synthetase BioD.